The sequence spans 532 residues: Putative cysteine desulfurase PbSufS (532 aa).

The signal sequence occupies residues 1-18 (MNNESICILLLLFVKITS). At lysine 286 the chain carries N6-(pyridoxal phosphate)lysine. The Cysteine persulfide intermediate role is filled by cysteine 480.

The protein belongs to the class-V pyridoxal-phosphate-dependent aminotransferase family. Csd subfamily. Monomer. Interacts with SufE; interaction enhances cysteine desulfurase activity of SufS. Pyridoxal 5'-phosphate is required as a cofactor.

It localises to the plastid. Its subcellular location is the apicoplast. It carries out the reaction (sulfur carrier)-H + L-cysteine = (sulfur carrier)-SH + L-alanine. It functions in the pathway cofactor biosynthesis; iron-sulfur cluster biosynthesis. Catalyzes sulfur activation and mobilization in sulfur mobilization (SUF) pathway for iron-sulfur (Fe-S) cluster biogenesis. Active when in complex with a partner protein SufE. Required for apicoplast maintenance. Plays a role in the development of sporozoites in oocysts in mosquitoes. This Plasmodium berghei (strain Anka) protein is Putative cysteine desulfurase PbSufS.